The primary structure comprises 251 residues: Ubiquinone/menaquinone biosynthesis C-methyltransferase UbiE (251 aa).

Residues Thr74, Asp95, 123–124 (NA), and Ser140 each bind S-adenosyl-L-methionine.

Belongs to the class I-like SAM-binding methyltransferase superfamily. MenG/UbiE family.

It carries out the reaction a 2-demethylmenaquinol + S-adenosyl-L-methionine = a menaquinol + S-adenosyl-L-homocysteine + H(+). The catalysed reaction is a 2-methoxy-6-(all-trans-polyprenyl)benzene-1,4-diol + S-adenosyl-L-methionine = a 5-methoxy-2-methyl-3-(all-trans-polyprenyl)benzene-1,4-diol + S-adenosyl-L-homocysteine + H(+). The protein operates within quinol/quinone metabolism; menaquinone biosynthesis; menaquinol from 1,4-dihydroxy-2-naphthoate: step 2/2. It functions in the pathway cofactor biosynthesis; ubiquinone biosynthesis. In terms of biological role, methyltransferase required for the conversion of demethylmenaquinol (DMKH2) to menaquinol (MKH2) and the conversion of 2-polyprenyl-6-methoxy-1,4-benzoquinol (DDMQH2) to 2-polyprenyl-3-methyl-6-methoxy-1,4-benzoquinol (DMQH2). The chain is Ubiquinone/menaquinone biosynthesis C-methyltransferase UbiE from Citrobacter koseri (strain ATCC BAA-895 / CDC 4225-83 / SGSC4696).